We begin with the raw amino-acid sequence, 131 residues long: Profilin (131 aa).

The protein belongs to the profilin family. As to quaternary structure, occurs in many kinds of cells as a complex with monomeric actin in a 1:1 ratio.

It is found in the cytoplasm. Its subcellular location is the cytoskeleton. In terms of biological role, binds to actin and affects the structure of the cytoskeleton. At high concentrations, profilin prevents the polymerization of actin, whereas it enhances it at low concentrations. By binding to PIP2, it inhibits the formation of IP3 and DG. The polypeptide is Profilin (Pyrus communis (Pear)).